We begin with the raw amino-acid sequence, 286 residues long: Protease HtpX homolog (286 aa).

2 helical membrane passes run 6-26 (TCFL…YVGG) and 28-48 (QGMI…YFFS). His130 contributes to the Zn(2+) binding site. Residue Glu131 is part of the active site. His134 is a Zn(2+) binding site. Transmembrane regions (helical) follow at residues 140–160 (ILTG…ANFA) and 178–198 (AIML…QMAI). Residue Glu203 participates in Zn(2+) binding.

This sequence belongs to the peptidase M48B family. Requires Zn(2+) as cofactor.

The protein localises to the cell inner membrane. The chain is Protease HtpX homolog from Campylobacter curvus (strain 525.92).